Reading from the N-terminus, the 495-residue chain is MEFAQLVDDPLKHVCRVLVVGCYVDGFRGRFFDDLDEALGGGLSSIYEQREFTGELNKVKLLNTFGKLPAERLLLVGLGNNEELNSDRLRQAAGAAATALRPVGVRKLSSILHLARDRGAETLTATVEGFALGSYSFDEYKTGKEPKTDLEEATLLFAEAGDLDYNVNKVLAETATICDAVRFARDLVSQPGNVLVPSYLAEKGREIAARYGLSCTVLEREEMAQNSMNALLAVAKGSHEPPKFIILEYRGGGEDDAVTVLVGKGVTFDSGGISLKPREGMEKMKDDMAGAAAVMGTMMAVAALKLSQNVVGLIPAAENLPGGGAYKPGDIVRSMSGQTIEIVNTDAEGRLLLCDALYFAQRYKPAALIDIATLTGACVIALGNFATGLMGNDEGLTRSLKRAGEVSGERVWELPLWDEYGELMESDIADMKNAGGPSGASISAGWFLHKFVGKTAWAHLDIAGTSWEEKGRPYRPKGATGVGVRLLVEYLRGLK.

Residues lysine 264 and aspartate 269 each contribute to the Mn(2+) site. The active site involves lysine 276. Positions 287, 346, and 348 each coordinate Mn(2+). The active site involves arginine 350.

The protein belongs to the peptidase M17 family. It depends on Mn(2+) as a cofactor.

The protein resides in the cytoplasm. It catalyses the reaction Release of an N-terminal amino acid, Xaa-|-Yaa-, in which Xaa is preferably Leu, but may be other amino acids including Pro although not Arg or Lys, and Yaa may be Pro. Amino acid amides and methyl esters are also readily hydrolyzed, but rates on arylamides are exceedingly low.. It carries out the reaction Release of an N-terminal amino acid, preferentially leucine, but not glutamic or aspartic acids.. In terms of biological role, presumably involved in the processing and regular turnover of intracellular proteins. Catalyzes the removal of unsubstituted N-terminal amino acids from various peptides. In Geotalea uraniireducens (strain Rf4) (Geobacter uraniireducens), this protein is Probable cytosol aminopeptidase.